Consider the following 428-residue polypeptide: D-amino acid dehydrogenase (428 aa).

An FAD-binding site is contributed by 3–17 (VVILGSGVVGVASAY).

The protein belongs to the DadA oxidoreductase family. FAD serves as cofactor.

The enzyme catalyses a D-alpha-amino acid + A + H2O = a 2-oxocarboxylate + AH2 + NH4(+). Its pathway is amino-acid degradation; D-alanine degradation; NH(3) and pyruvate from D-alanine: step 1/1. Functionally, oxidative deamination of D-amino acids. This is D-amino acid dehydrogenase from Burkholderia cenocepacia (strain HI2424).